A 1365-amino-acid chain; its full sequence is Killer toxin-resistance protein 5 (1365 aa).

Residues 1-17 (MRLLALVLLLLCAPLRA) form the signal peptide. N-linked (GlcNAc...) asparagine glycans are attached at residues N115, N228, N293, N457, N519, N523, N644, N870, N1091, N1150, and N1195. The interval 1334-1365 (FASSPGDEDVPGESVSSKYQDSDNAAPLHDEL) is disordered. Residues 1347–1356 (SVSSKYQDSD) are compositionally biased toward polar residues. Positions 1362 to 1365 (HDEL) match the Prevents secretion from ER motif.

This sequence to D.melanogaster UGGG.

The protein localises to the endoplasmic reticulum lumen. In terms of biological role, required for (1-&gt;6)-beta-D-glucan synthesis and normal cell growth. In Saccharomyces cerevisiae (strain ATCC 204508 / S288c) (Baker's yeast), this protein is Killer toxin-resistance protein 5 (KRE5).